Here is a 436-residue protein sequence, read N- to C-terminus: Enolase (436 aa).

(2R)-2-phosphoglycerate is bound at residue Gln-167. Glu-209 functions as the Proton donor in the catalytic mechanism. Residues Asp-246, Glu-291, and Asp-318 each coordinate Mg(2+). 4 residues coordinate (2R)-2-phosphoglycerate: Lys-343, Arg-372, Ser-373, and Lys-394. Lys-343 acts as the Proton acceptor in catalysis.

This sequence belongs to the enolase family. As to quaternary structure, component of the RNA degradosome, a multiprotein complex involved in RNA processing and mRNA degradation. Requires Mg(2+) as cofactor.

It is found in the cytoplasm. It localises to the secreted. The protein resides in the cell surface. It catalyses the reaction (2R)-2-phosphoglycerate = phosphoenolpyruvate + H2O. It participates in carbohydrate degradation; glycolysis; pyruvate from D-glyceraldehyde 3-phosphate: step 4/5. Functionally, catalyzes the reversible conversion of 2-phosphoglycerate (2-PG) into phosphoenolpyruvate (PEP). It is essential for the degradation of carbohydrates via glycolysis. The chain is Enolase from Actinobacillus pleuropneumoniae serotype 3 (strain JL03).